The primary structure comprises 121 residues: Large ribosomal subunit protein bL19 (121 aa).

Belongs to the bacterial ribosomal protein bL19 family.

Functionally, this protein is located at the 30S-50S ribosomal subunit interface and may play a role in the structure and function of the aminoacyl-tRNA binding site. The chain is Large ribosomal subunit protein bL19 from Borrelia garinii subsp. bavariensis (strain ATCC BAA-2496 / DSM 23469 / PBi) (Borreliella bavariensis).